The primary structure comprises 221 residues: Zingipain-2 (221 aa).

2 cysteine pairs are disulfide-bonded: C24-C65 and C58-C98. The active site involves C27. Residues N99 and N156 are each glycosylated (N-linked (GlcNAc...) asparagine). A disulfide bridge links C155 with C206. H161 is an active-site residue.

The protein belongs to the peptidase C1 family.

It catalyses the reaction Preferential cleavage of peptides with a proline residue at the P2 position.. Its function is as follows. Cysteine proteinase with a specific activity toward peptides with a proline residue at the P2 position. This is Zingipain-2 from Zingiber officinale (Ginger).